Here is a 292-residue protein sequence, read N- to C-terminus: Histamine N-methyltransferase (292 aa).

E28 serves as a coordination point for substrate. S-adenosyl-L-methionine-binding residues include G60, E89, Q94, S120, and I142. N283 is a substrate binding site.

Belongs to the class I-like SAM-binding methyltransferase superfamily. HNMT family. In terms of assembly, monomer. In terms of tissue distribution, expressed in jejunum, brain &gt; lung, spleen, stomach &gt; liver, kidney.

The protein resides in the cytoplasm. The catalysed reaction is histamine + S-adenosyl-L-methionine = N(tau)-methylhistamine + S-adenosyl-L-homocysteine + H(+). Its function is as follows. Inactivates histamine by N-methylation. Plays an important role in degrading histamine and in regulating the airway response to histamine. In Cavia porcellus (Guinea pig), this protein is Histamine N-methyltransferase (HNMT).